The primary structure comprises 643 residues: Pseudouridylate synthase PUS7L (643 aa).

Asp-284 functions as the Nucleophile in the catalytic mechanism. One can recognise a TRUD domain in the interval 370 to 597 (GFVNYYGPQR…PGCYRPLLAK (228 aa)).

The protein belongs to the pseudouridine synthase TruD family.

The enzyme catalyses a uridine in mRNA = a pseudouridine in mRNA. Pseudouridine synthase that catalyzes pseudouridylation of mRNAs. This chain is Pseudouridylate synthase PUS7L (pus7l), found in Danio rerio (Zebrafish).